We begin with the raw amino-acid sequence, 811 residues long: Actin filament-associated protein 1-like 2 (811 aa).

2 disordered regions span residues 67-110 (KEAQ…PPPK) and 132-168 (EPYN…QQHQ). Residues 181 to 277 (DAMICAFLWR…WLKVIQDISG (97 aa)) form the PH 1 domain. The disordered stretch occupies residues 294–326 (QRQIHPKAEGTDRHSGASESGSSTDGHPETPEI). Over residues 299–309 (PKAEGTDRHSG) the composition is skewed to basic and acidic residues. A PH 2 domain is found at 359 to 453 (ALETSNYLNV…WLGLLLLESG (95 aa)). 2 disordered regions span residues 500–532 (RGQR…GEAE) and 558–631 (LGSP…KERV). Composition is skewed to basic and acidic residues over residues 521–532 (DEPKSEEKGEAE), 566–577 (VSGKKDNEESER), and 622–631 (RLEKSNKERV). Residues 642–737 (LLGKNRTEAE…KENLRKAELG (96 aa)) adopt a coiled-coil conformation.

In terms of assembly, interacts with src.

It localises to the cytoplasm. Its function is as follows. May play a role in a signaling cascade by enhancing the kinase activity of src. Contributes to src-regulated transcription activation. This Xenopus laevis (African clawed frog) protein is Actin filament-associated protein 1-like 2 (afap1l2).